We begin with the raw amino-acid sequence, 162 residues long: D-aminoacyl-tRNA deacylase (162 aa).

Positions 145–146 match the Gly-cisPro motif, important for rejection of L-amino acids motif; sequence GP.

Belongs to the DTD family. Homodimer.

It is found in the cytoplasm. The catalysed reaction is glycyl-tRNA(Ala) + H2O = tRNA(Ala) + glycine + H(+). It catalyses the reaction a D-aminoacyl-tRNA + H2O = a tRNA + a D-alpha-amino acid + H(+). In terms of biological role, an aminoacyl-tRNA editing enzyme that deacylates mischarged D-aminoacyl-tRNAs. Also deacylates mischarged glycyl-tRNA(Ala), protecting cells against glycine mischarging by AlaRS. Acts via tRNA-based rather than protein-based catalysis; rejects L-amino acids rather than detecting D-amino acids in the active site. By recycling D-aminoacyl-tRNA to D-amino acids and free tRNA molecules, this enzyme counteracts the toxicity associated with the formation of D-aminoacyl-tRNA entities in vivo and helps enforce protein L-homochirality. This is D-aminoacyl-tRNA deacylase from Bifidobacterium longum subsp. infantis (strain ATCC 15697 / DSM 20088 / JCM 1222 / NCTC 11817 / S12).